Consider the following 244-residue polypeptide: 3-oxoacyl-[acyl-carrier-protein] reductase FabG (244 aa).

NADP(+)-binding positions include 12–15, T37, 59–60, and N86; these read GASR and NV. S138 provides a ligand contact to substrate. The active-site Proton acceptor is the Y151. NADP(+) contacts are provided by residues 151 to 155 and I184; that span reads YAAAK.

Belongs to the short-chain dehydrogenases/reductases (SDR) family. Homotetramer.

It carries out the reaction a (3R)-hydroxyacyl-[ACP] + NADP(+) = a 3-oxoacyl-[ACP] + NADPH + H(+). The protein operates within lipid metabolism; fatty acid biosynthesis. In terms of biological role, catalyzes the NADPH-dependent reduction of beta-ketoacyl-ACP substrates to beta-hydroxyacyl-ACP products, the first reductive step in the elongation cycle of fatty acid biosynthesis. This chain is 3-oxoacyl-[acyl-carrier-protein] reductase FabG (fabG), found in Vibrio cholerae serotype O1 (strain ATCC 39315 / El Tor Inaba N16961).